The primary structure comprises 156 residues: 6,7-dimethyl-8-ribityllumazine synthase (156 aa).

Residues F22, 57 to 59 (AYE), and 81 to 83 (TVI) each bind 5-amino-6-(D-ribitylamino)uracil. (2S)-2-hydroxy-3-oxobutyl phosphate is bound at residue 86–87 (GT). The active-site Proton donor is H89. F114 is a 5-amino-6-(D-ribitylamino)uracil binding site. R128 is a binding site for (2S)-2-hydroxy-3-oxobutyl phosphate.

It belongs to the DMRL synthase family. Forms an icosahedral capsid composed of 60 subunits, arranged as a dodecamer of pentamers.

The catalysed reaction is (2S)-2-hydroxy-3-oxobutyl phosphate + 5-amino-6-(D-ribitylamino)uracil = 6,7-dimethyl-8-(1-D-ribityl)lumazine + phosphate + 2 H2O + H(+). It participates in cofactor biosynthesis; riboflavin biosynthesis; riboflavin from 2-hydroxy-3-oxobutyl phosphate and 5-amino-6-(D-ribitylamino)uracil: step 1/2. Catalyzes the formation of 6,7-dimethyl-8-ribityllumazine by condensation of 5-amino-6-(D-ribitylamino)uracil with 3,4-dihydroxy-2-butanone 4-phosphate. This is the penultimate step in the biosynthesis of riboflavin. This Photorhabdus laumondii subsp. laumondii (strain DSM 15139 / CIP 105565 / TT01) (Photorhabdus luminescens subsp. laumondii) protein is 6,7-dimethyl-8-ribityllumazine synthase.